Reading from the N-terminus, the 442-residue chain is Cytochrome c biogenesis CcmF C-terminal-like mitochondrial protein (442 aa).

The next 3 membrane-spanning stretches (helical) occupy residues Asn6 to Leu26, Pro39 to Leu59, and Tyr122 to Ala142. A disordered region spans residues Arg151–Cys175. The span at Glu166–Cys175 shows a compositional bias: basic and acidic residues. The chain crosses the membrane as a helical span at residues Phe411–Leu431.

The protein belongs to the CcmF/CycK/Ccl1/NrfE/CcsA family. As to quaternary structure, interacts with CCMFN2.

It localises to the mitochondrion inner membrane. In terms of biological role, forms a complex with CCMFN1, CCMFN2 and CCMH that performs the assembly of heme with c-type apocytochromes in mitochondria. The protein is Cytochrome c biogenesis CcmF C-terminal-like mitochondrial protein (CCMFC) of Arabidopsis thaliana (Mouse-ear cress).